Reading from the N-terminus, the 391-residue chain is 5-amino-6-(D-ribitylamino)uracil--L-tyrosine 4-hydroxyphenyl transferase (391 aa).

Residues 55–302 (VTYVINRNIN…GAVARIYLGN (248 aa)) form the Radical SAM core domain. The [4Fe-4S] cluster site is built by cysteine 69, cysteine 73, and cysteine 76.

Belongs to the radical SAM superfamily. CofH family. In terms of assembly, consists of two subunits, CofG and CofH. The cofactor is [4Fe-4S] cluster.

It carries out the reaction 5-amino-6-(D-ribitylamino)uracil + L-tyrosine + S-adenosyl-L-methionine = 5-amino-5-(4-hydroxybenzyl)-6-(D-ribitylimino)-5,6-dihydrouracil + 2-iminoacetate + 5'-deoxyadenosine + L-methionine + H(+). It participates in cofactor biosynthesis; coenzyme F0 biosynthesis. Functionally, catalyzes the radical-mediated synthesis of 5-amino-5-(4-hydroxybenzyl)-6-(D-ribitylimino)-5,6-dihydrouracil from 5-amino-6-(D-ribitylamino)uracil and L-tyrosine. The protein is 5-amino-6-(D-ribitylamino)uracil--L-tyrosine 4-hydroxyphenyl transferase of Trichormus variabilis (strain ATCC 29413 / PCC 7937) (Anabaena variabilis).